The following is a 256-amino-acid chain: H-2 class II histocompatibility antigen, A-B alpha chain (256 aa).

An N-terminal signal peptide occupies residues 1-23 (MPRSRALILGVLALTTMLSLCGG). The alpha-1 stretch occupies residues 24 to 111 (EDDIEADHVG…KRSNSTPATN (88 aa)). The Extracellular segment spans residues 24–218 (EDDIEADHVG…IPAPMSELTE (195 aa)). The interval 112–205 (EAPQATVFPK…GLEEPVLKHW (94 aa)) is alpha-2. One can recognise an Ig-like C1-type domain in the interval 114 to 206 (PQATVFPKSP…LEEPVLKHWE (93 aa)). C134 and C190 form a disulfide bridge. An N-linked (GlcNAc...) asparagine glycan is attached at N145. Residues 206-218 (EPEIPAPMSELTE) form a connecting peptide region. Residues 219-244 (TVVCALGLSVGLVGIVVGTIFIIQGL) form a helical membrane-spanning segment. The Cytoplasmic segment spans residues 245 to 256 (RSGGTSRHPGPL).

Belongs to the MHC class II family.

It is found in the membrane. In Mus musculus (Mouse), this protein is H-2 class II histocompatibility antigen, A-B alpha chain (H2-Aa).